A 349-amino-acid polypeptide reads, in one-letter code: tRNA pseudouridine synthase D (349 aa).

F26 provides a ligand contact to substrate. The active-site Nucleophile is the D79. Residue N128 coordinates substrate. One can recognise a TRUD domain in the interval 154 to 302; it reads GVPNYFGSQR…VEGSRRAVLL (149 aa). A substrate-binding site is contributed by F328.

The protein belongs to the pseudouridine synthase TruD family.

It carries out the reaction uridine(13) in tRNA = pseudouridine(13) in tRNA. Functionally, responsible for synthesis of pseudouridine from uracil-13 in transfer RNAs. This Yersinia pseudotuberculosis serotype O:1b (strain IP 31758) protein is tRNA pseudouridine synthase D.